The primary structure comprises 153 residues: Hemoglobin-3 (153 aa).

S2 is modified (N-acetylserine). Positions 4-150 constitute a Globin domain; it reads GLTGPQKAAL…ICRVQGDFMK (147 aa). Position 99 (H99) interacts with heme b.

Belongs to the globin family. As to quaternary structure, homotetramer.

The protein localises to the cytoplasm. This chain is Hemoglobin-3, found in Phacoides pectinatus (Thick lucine).